A 108-amino-acid chain; its full sequence is Mitochondrial pyruvate carrier 4 (108 aa).

3 helical membrane-spanning segments follow: residues 19–35, 51–67, and 74–90; these read IHFW…IANI, IAVT…SMVI, and LFSV…YQLA.

It belongs to the mitochondrial pyruvate carrier (MPC) (TC 2.A.105) family.

It localises to the mitochondrion inner membrane. Mediates the uptake of pyruvate into mitochondria. This Arabidopsis thaliana (Mouse-ear cress) protein is Mitochondrial pyruvate carrier 4.